Reading from the N-terminus, the 264-residue chain is Short chain dehydrogenase CPUR_05429 (264 aa).

NADP(+) is bound by residues Ile24, Asp70, Asn97, and Arg130. Catalysis depends on proton donor residues Ser146 and Ser147. The NADP(+) site is built by Tyr161, Lys165, and Thr196. Tyr161 functions as the Proton acceptor in the catalytic mechanism. The active-site Lowers pKa of active site Tyr is Lys165.

It belongs to the short-chain dehydrogenases/reductases (SDR) family.

Its pathway is pigment biosynthesis. Short chain dehydrogenase; part of the ergochrome gene cluster responsible for the typical purple-black color of the ergot sclerotia. The ergochrome gene cluster produces several ergot pigments including the yellow ergochrome secalonic acid and its derivatives, as well as the red anthraquinones endocrocin and clavorubin. The pathway begins with the synthesis of atrochrysone thioester by the polyketide synthase (PKS) CPUR_05437. The atrochrysone carboxyl ACP thioesterase CPUR_05436 then breaks the thioester bond and releases the atrochrysone carboxylic acid from CPUR_05437. The atrochrysone carboxylic acid is then converted to atrochrysone which is further transformed into emodin anthrone. The next step is performed by the anthrone oxygenase CPUR_05434 that catalyzes the oxidation of emodinanthrone to emodin. Emodin is further modified to yield monodictyphenone via several steps involving CPUR_05427, CPUR_05428, CPUR_05429 and CPUR_05430. The short chain dehydrogenase/reductase CPUR_05418 then catalyzes the C-5 ketoreduction to give the xanthone skeleton of the monomeric units. Ergochromes formation requires further dimerization steps of different xanthone units, probably catalyzed by the cytochrome P450 monooxygenase CPUR_05419. CPUR_05425, CPUR_05426 and CPUR_05431 are unique to Claviceps, thus it is likely that they are involved in further modification of xanthone units or in their dimerization. The yellow ergochromes and the red anthraquinone pigments endocrocin and clavorubin are products from the same PKS derived precursors and the latter are likely shunt products in the pathway of xanthone biosynthesis. It is proposed that atrochrysone carboxylic acid released from the PKS CPUR_05437 can also be converted to endocrocin anthrone which is further oxidized into endocrocin by CPUR_05435. Endocrocin could be then modified to clavorubin, possibly by CPUR_05423 and CPUR_05431. Clavorubin is the principal anthraquinone metabolite produced by the cluster with a much higher yield compared to endocrocin. The protein is Short chain dehydrogenase CPUR_05429 of Claviceps purpurea (strain 20.1) (Ergot fungus).